We begin with the raw amino-acid sequence, 205 residues long: Ribonuclease HII (205 aa).

In terms of domain architecture, RNase H type-2 spans 15–205; sequence SRVCGIDEAG…SFKLRKLGEK (191 aa). 3 residues coordinate a divalent metal cation: aspartate 21, glutamate 22, and aspartate 117.

It belongs to the RNase HII family. Mn(2+) serves as cofactor. The cofactor is Mg(2+).

Its subcellular location is the cytoplasm. The catalysed reaction is Endonucleolytic cleavage to 5'-phosphomonoester.. Endonuclease that specifically degrades the RNA of RNA-DNA hybrids. This Chlorobaculum parvum (strain DSM 263 / NCIMB 8327) (Chlorobium vibrioforme subsp. thiosulfatophilum) protein is Ribonuclease HII.